A 464-amino-acid polypeptide reads, in one-letter code: tRNA modification GTPase MnmE (464 aa).

3 residues coordinate (6S)-5-formyl-5,6,7,8-tetrahydrofolate: arginine 27, glutamate 90, and lysine 129. The region spanning 222–384 (GIALVLAGSV…LYDKIRSLTC (163 aa)) is the TrmE-type G domain. Residues 232-237 (NVGKSS), 251-257 (SSYAGTT), and 276-279 (DTAG) each bind GTP. Positions 236 and 257 each coordinate Mg(2+). Lysine 464 serves as a coordination point for (6S)-5-formyl-5,6,7,8-tetrahydrofolate.

Belongs to the TRAFAC class TrmE-Era-EngA-EngB-Septin-like GTPase superfamily. TrmE GTPase family. In terms of assembly, homodimer. Heterotetramer of two MnmE and two MnmG subunits. The cofactor is K(+).

The protein localises to the cytoplasm. In terms of biological role, exhibits a very high intrinsic GTPase hydrolysis rate. Involved in the addition of a carboxymethylaminomethyl (cmnm) group at the wobble position (U34) of certain tRNAs, forming tRNA-cmnm(5)s(2)U34. This chain is tRNA modification GTPase MnmE, found in Borrelia turicatae (strain 91E135).